The following is a 239-amino-acid chain: tRNA (guanine-N(1)-)-methyltransferase (239 aa).

S-adenosyl-L-methionine is bound by residues Gly-109 and 128-133 (IGDYVL).

It belongs to the RNA methyltransferase TrmD family. Homodimer.

Its subcellular location is the cytoplasm. It carries out the reaction guanosine(37) in tRNA + S-adenosyl-L-methionine = N(1)-methylguanosine(37) in tRNA + S-adenosyl-L-homocysteine + H(+). Functionally, specifically methylates guanosine-37 in various tRNAs. This Thermus thermophilus (strain ATCC BAA-163 / DSM 7039 / HB27) protein is tRNA (guanine-N(1)-)-methyltransferase.